We begin with the raw amino-acid sequence, 333 residues long: Ornithine carbamoyltransferase (333 aa).

Carbamoyl phosphate contacts are provided by residues 56 to 59, Arg-107, and 134 to 137; these read STRT and HPTQ. L-ornithine is bound by residues Asn-167, Asp-231, and 235-236; that span reads SM. Carbamoyl phosphate-binding positions include 273–274 and Arg-318; that span reads CL.

Belongs to the aspartate/ornithine carbamoyltransferase superfamily. OTCase family.

Its subcellular location is the cytoplasm. It catalyses the reaction carbamoyl phosphate + L-ornithine = L-citrulline + phosphate + H(+). It participates in amino-acid degradation; L-arginine degradation via ADI pathway; carbamoyl phosphate from L-arginine: step 2/2. Reversibly catalyzes the transfer of the carbamoyl group from carbamoyl phosphate (CP) to the N(epsilon) atom of ornithine (ORN) to produce L-citrulline. This chain is Ornithine carbamoyltransferase, found in Clostridium botulinum (strain ATCC 19397 / Type A).